We begin with the raw amino-acid sequence, 354 residues long: Clavesin-1 (354 aa).

The 162-residue stretch at 118-279 folds into the CRAL-TRIO domain; sequence IKRALIDGFP…EFGGTLPPYD (162 aa). The disordered stretch occupies residues 317-354; it reads RECSPKPMKRSQSVVEAGTLKHEEKGENENTQPLLALD. A compositionally biased stretch (basic and acidic residues) spans 335–344; it reads TLKHEEKGEN. The segment covering 345-354 has biased composition (polar residues); sequence ENTQPLLALD.

As to quaternary structure, forms a complex with clathrin heavy chain and gamma-adaptin.

The protein resides in the golgi apparatus. It localises to the trans-Golgi network membrane. It is found in the early endosome membrane. Its subcellular location is the cytoplasmic vesicle. The protein localises to the clathrin-coated vesicle. In terms of biological role, required for normal morphology of late endosomes and/or lysosomes in neurons. Binds phosphatidylinositol 3,5-bisphosphate (PtdIns(3,5)P2). This is Clavesin-1 (Clvs1) from Mus musculus (Mouse).